The chain runs to 798 residues: Putative antiporter subunit mnhA2 (798 aa).

21 helical membrane-spanning segments follow: residues Met1 to Leu21, Ile33 to Met53, Gly78 to Ala98, Leu109 to Ala129, Ile133 to Trp153, Phe167 to Val187, Phe209 to Phe229, Thr241 to Phe261, Phe272 to Ala292, Ala300 to Gly320, Met337 to Phe357, Val381 to Phe401, Ile431 to Ile451, Pro472 to Ile492, Gly526 to Leu546, Ile593 to Phe613, Gly625 to Ile645, Leu649 to Met669, Leu674 to Ser694, Ala710 to Ala730, and Ile766 to Leu786.

It belongs to the CPA3 antiporters (TC 2.A.63) subunit A family. As to quaternary structure, may form a heterooligomeric complex that consists of seven subunits: mnhA2, mnhB2, mnhC2, mnhD2, mnhE2, mnhF2 and mnhG2.

Its subcellular location is the cell membrane. The chain is Putative antiporter subunit mnhA2 (mnhA2) from Staphylococcus saprophyticus subsp. saprophyticus (strain ATCC 15305 / DSM 20229 / NCIMB 8711 / NCTC 7292 / S-41).